A 369-amino-acid chain; its full sequence is 3-dehydroquinate synthase (369 aa).

NAD(+)-binding positions include aspartate 71–lysine 76, glycine 105–aspartate 109, threonine 129–threonine 130, lysine 142, lysine 151, and threonine 169–threonine 172. Zn(2+) is bound by residues glutamate 184, histidine 247, and histidine 264.

Belongs to the sugar phosphate cyclases superfamily. Dehydroquinate synthase family. Co(2+) is required as a cofactor. Zn(2+) serves as cofactor. Requires NAD(+) as cofactor.

It is found in the cytoplasm. It catalyses the reaction 7-phospho-2-dehydro-3-deoxy-D-arabino-heptonate = 3-dehydroquinate + phosphate. It participates in metabolic intermediate biosynthesis; chorismate biosynthesis; chorismate from D-erythrose 4-phosphate and phosphoenolpyruvate: step 2/7. Its function is as follows. Catalyzes the conversion of 3-deoxy-D-arabino-heptulosonate 7-phosphate (DAHP) to dehydroquinate (DHQ). The protein is 3-dehydroquinate synthase of Dichelobacter nodosus (strain VCS1703A).